Consider the following 299-residue polypeptide: Oxygen-dependent coproporphyrinogen-III oxidase (299 aa).

Position 92 (serine 92) interacts with substrate. Residues histidine 96 and histidine 106 each coordinate a divalent metal cation. Catalysis depends on histidine 106, which acts as the Proton donor. Residue 108 to 110 participates in substrate binding; the sequence is NVR. The a divalent metal cation site is built by histidine 145 and histidine 175. The interval 240 to 275 is important for dimerization; that stretch reads YVEFNLVWDRGTLFGLQTGGRTESILMSMPPLVRWE. 258–260 serves as a coordination point for substrate; that stretch reads GGR.

This sequence belongs to the aerobic coproporphyrinogen-III oxidase family. Homodimer. It depends on a divalent metal cation as a cofactor.

The protein resides in the cytoplasm. The enzyme catalyses coproporphyrinogen III + O2 + 2 H(+) = protoporphyrinogen IX + 2 CO2 + 2 H2O. It participates in porphyrin-containing compound metabolism; protoporphyrin-IX biosynthesis; protoporphyrinogen-IX from coproporphyrinogen-III (O2 route): step 1/1. Functionally, involved in the heme biosynthesis. Catalyzes the aerobic oxidative decarboxylation of propionate groups of rings A and B of coproporphyrinogen-III to yield the vinyl groups in protoporphyrinogen-IX. The sequence is that of Oxygen-dependent coproporphyrinogen-III oxidase from Salmonella typhi.